The sequence spans 527 residues: Transcriptional regulator ATRX (527 aa).

Positions Gly-1–Arg-527 are disordered. The span at Arg-14 to Gly-23 shows a compositional bias: polar residues. Positions Pro-27–Lys-46 are enriched in basic and acidic residues. Basic residues predominate over residues Glu-47–Lys-59. Over residues Val-60–Gln-84 the composition is skewed to basic and acidic residues. Residues Ser-62 and Ser-74 each carry the phosphoserine modification. The segment covering Gly-85 to Lys-94 has biased composition (basic residues). Composition is skewed to basic and acidic residues over residues Lys-95–Glu-122, Asn-136–Lys-145, Asp-152–Gln-194, and Lys-204–Lys-250. Residue Lys-105 forms a Glycyl lysine isopeptide (Lys-Gly) (interchain with G-Cter in SUMO2) linkage. Phosphoserine is present on residues Ser-112, Ser-113, and Ser-114. Residue Ser-162 is modified to Phosphoserine. Arg-184 is modified (citrulline). The span at Lys-267–Arg-297 shows a compositional bias: basic residues. The segment at Leu-290–Ser-427 is interaction with DAXX. A phosphoserine mark is found at Ser-345, Ser-346, and Ser-354. Positions Pro-368–Lys-382 are enriched in basic and acidic residues. A compositionally biased stretch (acidic residues) spans Ser-387–Lys-398. Basic and acidic residues predominate over residues Glu-399–Glu-410. A phosphoserine mark is found at Ser-423, Ser-425, and Ser-427. Residues Pro-435–Leu-446 are compositionally biased toward basic residues. A phosphoserine mark is found at Ser-449 and Ser-453. Composition is skewed to basic and acidic residues over residues Gly-454–Gly-469 and Lys-509–Arg-518.

The protein belongs to the SNF2/RAD54 helicase family. As to quaternary structure, interacts with DAXX to form the chromatin remodeling complex ATRX:DAXX. Probably binds EZH2. Binds annexin V in a calcium and phosphatidylcholine/phosphatidylserine-dependent manner. Interacts directly with CBX5 via the PxVxL motif. Interacts with RAD50, MRE11 and NBN; indicative for an association with the MRN complex. Interacts with histone MACROH2A1. Interacts with histone H3 peptides methylated at 'Lys-10' with preferences H3K9me3 &gt; H3K9me2 &gt; H3K9me1. Interacts with histone H3 peptides unmethylated at 'Lys-5' (H3K4me0). Interacts with MECP2, SMC1 and SMC3. Interacts with SETDB1, TRIM28 and ZNF274. Citrullinated by PADI4.

Its subcellular location is the nucleus. It is found in the chromosome. The protein resides in the telomere. It localises to the PML body. The enzyme catalyses ATP + H2O = ADP + phosphate + H(+). In terms of biological role, involved in transcriptional regulation and chromatin remodeling. Facilitates DNA replication in multiple cellular environments and is required for efficient replication of a subset of genomic loci. Binds to DNA tandem repeat sequences in both telomeres and euchromatin and in vitro binds DNA quadruplex structures. May help stabilizing G-rich regions into regular chromatin structures by remodeling G4 DNA and incorporating H3.3-containing nucleosomes. Catalytic component of the chromatin remodeling complex ATRX:DAXX which has ATP-dependent DNA translocase activity and catalyzes the replication-independent deposition of histone H3.3 in pericentric DNA repeats outside S-phase and telomeres, and the in vitro remodeling of H3.3-containing nucleosomes. Its heterochromatin targeting is proposed to involve a combinatorial readout of histone H3 modifications (specifically methylation states of H3K9 and H3K4) and association with CBX5. Involved in maintaining telomere structural integrity in embryonic stem cells probably implying recruitment of CBX5 to telomeres. May be involved in transcriptional regulation of telomeric repeat-containing RNA (TERRA). Acts as a negative regulator of chromatin incorporation of transcriptionally repressive histone MACROH2A1, particularily at telomeres. Participates in the allele-specific gene expression at the imprinted IGF2/H19 gene locus. On the maternal allele, required for the chromatin occupancy of SMC1 and CTCTF within the H19 imprinting control region (ICR) and involved in esatblishment of histone tails modifications in the ICR. Binds to zinc-finger coding genes with atypical chromatin signatures and regulates its H3K9me3 levels. Forms a complex with ZNF274, TRIM28 and SETDB1 to facilitate the deposition and maintenance of H3K9me3 at the 3' exons of zinc-finger genes. The protein is Transcriptional regulator ATRX (Atrx) of Rattus norvegicus (Rat).